We begin with the raw amino-acid sequence, 418 residues long: Serine hydroxymethyltransferase (418 aa).

Residues Leu121 and 125–127 (GHL) each bind (6S)-5,6,7,8-tetrahydrofolate. Lys230 is subject to N6-(pyridoxal phosphate)lysine. 355 to 357 (SPF) contributes to the (6S)-5,6,7,8-tetrahydrofolate binding site.

It belongs to the SHMT family. In terms of assembly, homodimer. It depends on pyridoxal 5'-phosphate as a cofactor.

It is found in the cytoplasm. The catalysed reaction is (6R)-5,10-methylene-5,6,7,8-tetrahydrofolate + glycine + H2O = (6S)-5,6,7,8-tetrahydrofolate + L-serine. It participates in one-carbon metabolism; tetrahydrofolate interconversion. Its pathway is amino-acid biosynthesis; glycine biosynthesis; glycine from L-serine: step 1/1. Functionally, catalyzes the reversible interconversion of serine and glycine with tetrahydrofolate (THF) serving as the one-carbon carrier. This reaction serves as the major source of one-carbon groups required for the biosynthesis of purines, thymidylate, methionine, and other important biomolecules. Also exhibits THF-independent aldolase activity toward beta-hydroxyamino acids, producing glycine and aldehydes, via a retro-aldol mechanism. This chain is Serine hydroxymethyltransferase, found in Streptococcus pyogenes serotype M49 (strain NZ131).